Consider the following 559-residue polypeptide: Endoglin (559 aa).

Positions 1-20 (MKSICCVLVLCLLLCRRSTA) are cleaved as a signal peptide. Residues 21 to 473 (SESICELKDV…SCFEFGLSAV (453 aa)) lie on the Extracellular side of the membrane. Disulfide bonds link Cys-25/Cys-201 and Cys-47/Cys-174. Asn-55, Asn-79, Asn-109, Asn-133, Asn-170, Asn-302, and Asn-352 each carry an N-linked (GlcNAc...) asparagine glycan. Cys-381 and Cys-427 are oxidised to a cystine. Residues 474-494 (LGIAFGGFLIGVLLTGALWFI) form a helical membrane-spanning segment. Residues 495–559 (KIRTGHPVAL…TQSTPTSSMA (65 aa)) are Cytoplasmic-facing. A disordered region spans residues 528-559 (RQPVPTHPSPSENSSANASIGSTQSTPTSSMA). Residues 536–546 (SPSENSSANAS) show a composition bias toward low complexity. The span at 547–559 (IGSTQSTPTSSMA) shows a compositional bias: polar residues.

In terms of assembly, homodimer; disulfide-linked.

It localises to the cell membrane. Vascular endothelium glycoprotein that plays an important role in the regulation of angiogenesis. Required for normal structure and integrity of adult vasculature. Important for endothelial cell shape changes in response to blood flow, which drive vascular remodeling and establishment of normal vascular morphology during angiogenesis. This chain is Endoglin, found in Danio rerio (Zebrafish).